The sequence spans 381 residues: Cytochrome b (381 aa).

4 consecutive transmembrane segments (helical) span residues 34 to 54 (FGSH…FLAM), 78 to 99 (WLIR…YLHI), 114 to 134 (WNIG…GYVL), and 179 to 199 (FFAF…IHLL). Residues histidine 84 and histidine 98 each contribute to the heme b site. Heme b is bound by residues histidine 183 and histidine 197. An a ubiquinone-binding site is contributed by histidine 202. A run of 4 helical transmembrane segments spans residues 227–247 (YKDL…ALFM), 289–309 (LGGV…PLLH), 321–341 (MTQI…WIGG), and 348–368 (FIMV…IIMP).

Belongs to the cytochrome b family. In terms of assembly, the cytochrome bc1 complex contains 3 respiratory subunits (MT-CYB, CYC1 and UQCRFS1), 2 core proteins (UQCRC1 and UQCRC2) and probably 6 low-molecular weight proteins. It depends on heme b as a cofactor.

It is found in the mitochondrion inner membrane. Component of the ubiquinol-cytochrome c reductase complex (complex III or cytochrome b-c1 complex) that is part of the mitochondrial respiratory chain. The b-c1 complex mediates electron transfer from ubiquinol to cytochrome c. Contributes to the generation of a proton gradient across the mitochondrial membrane that is then used for ATP synthesis. The protein is Cytochrome b (mt-cyb) of Carcharhinus porosus (Smalltail shark).